The chain runs to 115 residues: NADH-ubiquinone oxidoreductase chain 3 (115 aa).

3 consecutive transmembrane segments (helical) span residues 4–24 (IMVISVNIILSSTLILVAFWL), 55–75 (FFLVAITFLLFDLEIALLLPI), and 86–106 (TMMLTAFILVSILALGLAYEW).

This sequence belongs to the complex I subunit 3 family. Core subunit of respiratory chain NADH dehydrogenase (Complex I) which is composed of 45 different subunits. Interacts with TMEM186. Interacts with TMEM242.

It is found in the mitochondrion inner membrane. The catalysed reaction is a ubiquinone + NADH + 5 H(+)(in) = a ubiquinol + NAD(+) + 4 H(+)(out). Functionally, core subunit of the mitochondrial membrane respiratory chain NADH dehydrogenase (Complex I) which catalyzes electron transfer from NADH through the respiratory chain, using ubiquinone as an electron acceptor. Essential for the catalytic activity of complex I. This Baiomys taylori (Northern pygmy mouse) protein is NADH-ubiquinone oxidoreductase chain 3.